We begin with the raw amino-acid sequence, 231 residues long: Flagellar L-ring protein (231 aa).

Positions 1–18 are cleaved as a signal peptide; sequence MNRYVSVLALSGIAVLAG. A lipid anchor (N-palmitoyl cysteine) is attached at Cys-19. Cys-19 is lipidated: S-diacylglycerol cysteine.

The protein belongs to the FlgH family. As to quaternary structure, the basal body constitutes a major portion of the flagellar organelle and consists of four rings (L,P,S, and M) mounted on a central rod.

Its subcellular location is the cell outer membrane. The protein resides in the bacterial flagellum basal body. Its function is as follows. Assembles around the rod to form the L-ring and probably protects the motor/basal body from shearing forces during rotation. The polypeptide is Flagellar L-ring protein (Pseudomonas fluorescens (strain SBW25)).